The chain runs to 130 residues: Riboflavin kinase (130 aa).

CDP is bound at residue 10-15; that stretch reads GFGEGK. Mg(2+)-binding residues include T39 and N41. 2 residues coordinate FMN: T96 and E104. Residue 109 to 112 coordinates CDP; that stretch reads VNLR.

Belongs to the archaeal riboflavin kinase family. It depends on Mg(2+) as a cofactor.

The enzyme catalyses riboflavin + CTP = CDP + FMN + H(+). Its pathway is cofactor biosynthesis; FMN biosynthesis; FMN from riboflavin (CTP route): step 1/1. Its function is as follows. Catalyzes the CTP-dependent phosphorylation of riboflavin (vitamin B2) to form flavin mononucleotide (FMN). The sequence is that of Riboflavin kinase from Methanococcus vannielii (strain ATCC 35089 / DSM 1224 / JCM 13029 / OCM 148 / SB).